The chain runs to 260 residues: Phosphoribosylaminoimidazole-succinocarboxamide synthase (260 aa).

Belongs to the SAICAR synthetase family.

It carries out the reaction 5-amino-1-(5-phospho-D-ribosyl)imidazole-4-carboxylate + L-aspartate + ATP = (2S)-2-[5-amino-1-(5-phospho-beta-D-ribosyl)imidazole-4-carboxamido]succinate + ADP + phosphate + 2 H(+). Its pathway is purine metabolism; IMP biosynthesis via de novo pathway; 5-amino-1-(5-phospho-D-ribosyl)imidazole-4-carboxamide from 5-amino-1-(5-phospho-D-ribosyl)imidazole-4-carboxylate: step 1/2. The polypeptide is Phosphoribosylaminoimidazole-succinocarboxamide synthase (Pelagibacter ubique (strain HTCC1062)).